Here is an 804-residue protein sequence, read N- to C-terminus: Phenylalanine--tRNA ligase beta subunit (804 aa).

One can recognise a tRNA-binding domain in the interval F40–Y161. The 74-residue stretch at E413–P486 folds into the B5 domain. D464, D470, E473, and E474 together coordinate Mg(2+). Residues D710–I804 form the FDX-ACB domain.

This sequence belongs to the phenylalanyl-tRNA synthetase beta subunit family. Type 1 subfamily. Tetramer of two alpha and two beta subunits. Requires Mg(2+) as cofactor.

Its subcellular location is the cytoplasm. It carries out the reaction tRNA(Phe) + L-phenylalanine + ATP = L-phenylalanyl-tRNA(Phe) + AMP + diphosphate + H(+). This Mycoplasmoides gallisepticum (strain R(low / passage 15 / clone 2)) (Mycoplasma gallisepticum) protein is Phenylalanine--tRNA ligase beta subunit.